Here is a 231-residue protein sequence, read N- to C-terminus: uncharacterized protein (231 aa).

The N-terminal stretch at methionine 1–alanine 17 is a signal peptide. The tract at residues lysine 197–leucine 231 is disordered.

This is an uncharacterized protein from Caenorhabditis elegans.